A 62-amino-acid chain; its full sequence is Photosystem II reaction center protein Z (62 aa).

2 consecutive transmembrane segments (helical) span residues 8 to 28 (LVVA…ITLS) and 41 to 61 (VTAS…NSFV).

This sequence belongs to the PsbZ family. As to quaternary structure, PSII is composed of 1 copy each of membrane proteins PsbA, PsbB, PsbC, PsbD, PsbE, PsbF, PsbH, PsbI, PsbJ, PsbK, PsbL, PsbM, PsbT, PsbX, PsbY, PsbZ, Psb30/Ycf12, at least 3 peripheral proteins of the oxygen-evolving complex and a large number of cofactors. It forms dimeric complexes.

Its subcellular location is the plastid. The protein localises to the chloroplast thylakoid membrane. Its function is as follows. May control the interaction of photosystem II (PSII) cores with the light-harvesting antenna, regulates electron flow through the 2 photosystem reaction centers. PSII is a light-driven water plastoquinone oxidoreductase, using light energy to abstract electrons from H(2)O, generating a proton gradient subsequently used for ATP formation. In Cyanidioschyzon merolae (strain NIES-3377 / 10D) (Unicellular red alga), this protein is Photosystem II reaction center protein Z.